Here is a 125-residue protein sequence, read N- to C-terminus: Small ribosomal subunit protein eS8 (125 aa).

A compositionally biased stretch (polar residues) spans 1–11; it reads MAISQGKSTRL. Residues 1-38 are disordered; the sequence is MAISQGKSTRLPSGARNVANRGKRKAELGRDPAETRVD. Over residues 25–38 the composition is skewed to basic and acidic residues; that stretch reads KAELGRDPAETRVD.

The protein belongs to the eukaryotic ribosomal protein eS8 family. In terms of assembly, part of the 30S ribosomal subunit.

The chain is Small ribosomal subunit protein eS8 from Methanobrevibacter smithii (strain ATCC 35061 / DSM 861 / OCM 144 / PS).